Here is a 98-residue protein sequence, read N- to C-terminus: NADH-ubiquinone oxidoreductase chain 4L (98 aa).

3 helical membrane passes run 1–21, 29–49, and 61–81; these read MSLT…GLLL, SLLC…MIIL, and IILL…LVMV.

Belongs to the complex I subunit 4L family. As to quaternary structure, core subunit of respiratory chain NADH dehydrogenase (Complex I) which is composed of 45 different subunits.

Its subcellular location is the mitochondrion inner membrane. The enzyme catalyses a ubiquinone + NADH + 5 H(+)(in) = a ubiquinol + NAD(+) + 4 H(+)(out). In terms of biological role, core subunit of the mitochondrial membrane respiratory chain NADH dehydrogenase (Complex I) which catalyzes electron transfer from NADH through the respiratory chain, using ubiquinone as an electron acceptor. Part of the enzyme membrane arm which is embedded in the lipid bilayer and involved in proton translocation. The polypeptide is NADH-ubiquinone oxidoreductase chain 4L (MT-ND4L) (Platyrrhinus brachycephalus (Short-headed broad-nosed bat)).